The chain runs to 307 residues: Homoserine O-acetyltransferase (307 aa).

Cys142 (acyl-thioester intermediate) is an active-site residue. The substrate site is built by Lys163 and Ser192. The Proton acceptor role is filled by His235. Residue Glu237 is part of the active site. Arg249 is a binding site for substrate.

Belongs to the MetA family.

The protein resides in the cytoplasm. The catalysed reaction is L-homoserine + acetyl-CoA = O-acetyl-L-homoserine + CoA. It functions in the pathway amino-acid biosynthesis; L-methionine biosynthesis via de novo pathway; O-acetyl-L-homoserine from L-homoserine: step 1/1. Transfers an acetyl group from acetyl-CoA to L-homoserine, forming acetyl-L-homoserine. The chain is Homoserine O-acetyltransferase from Desulfitobacterium hafniense (strain DSM 10664 / DCB-2).